Reading from the N-terminus, the 961-residue chain is Leucine-rich repeat-containing protein egg-6 (961 aa).

The N-terminal stretch at 1 to 18 is a signal peptide; sequence MRWLTLIAVAHLIAFLSS. Residues 19–854 are Extracellular-facing; sequence AEITCPRIPE…EQNERHRNIR (836 aa). 17 LRR repeats span residues 60 to 78, 79 to 101, 103 to 124, 125 to 148, 150 to 172, 174 to 197, 199 to 222, 223 to 245, 247 to 269, 270 to 294, 305 to 316, 317 to 339, 340 to 363, 364 to 387, 388 to 411, 413 to 435, and 437 to 455; these read IDEL…SLPF, NGLR…AWRH, EATI…VFGN, LSTL…AFNG, SALT…SLDA, KASL…ILRN, ANLM…LMNL, PFLR…AFMN, PQLQ…RLQG, FKNL…DLPN, ITKIETLAFSNN, PNLQ…SFES, LDKL…MFDG, MKNL…SFAQ, LAHL…TFDK, SKLF…VFKK, and ISNI…SFNE. A helical transmembrane segment spans residues 855–875; that stretch reads IITAIALAFVGAVTVVVIIFF. The Cytoplasmic segment spans residues 876 to 961; that stretch reads VNYTKKQRRL…PQAVSHRSRH (86 aa). The disordered stretch occupies residues 890–943; the sequence is VYRSSPSSSGSSGQNAANESGRSSAAPSPIRPPLMNIPKTPNNRTMESTFGQPQ. Low complexity predominate over residues 893–902; the sequence is SSPSSSGSSG. The segment covering 928–943 has biased composition (polar residues); sequence KTPNNRTMESTFGQPQ.

In L1 larvae, expressed in a subset of epithelial cells including epidermal, vulval and rectal cells and the excretory duct and pore. Also detected in some neurons. Absent from internal epithelia such as the gut and pharyngeal tubes.

Its subcellular location is the apical cell membrane. Required for apical extracellular matrix organization and epithelial junction maintenance. The polypeptide is Leucine-rich repeat-containing protein egg-6 (Caenorhabditis elegans).